A 413-amino-acid chain; its full sequence is Sensor protein SphS (413 aa).

The 223-residue stretch at 176–398 (DVAHELKTPL…WLRVQLPQEP (223 aa)) folds into the Histidine kinase domain. His179 carries the post-translational modification Phosphohistidine; by autocatalysis.

Its subcellular location is the cytoplasm. The enzyme catalyses ATP + protein L-histidine = ADP + protein N-phospho-L-histidine.. In terms of biological role, member of the two-component regulatory system SphR/SphS. Sensory kinase. Is involved in inducible production of alkaline phosphatase in response to phosphate limitation as it is directly involved in the regulation of phoA transcription in response to phosphate limitation. SphS functions as a protein kinase that phosphorylates SphR. The chain is Sensor protein SphS (sphS) from Synechococcus elongatus (strain ATCC 33912 / PCC 7942 / FACHB-805) (Anacystis nidulans R2).